The sequence spans 496 residues: MEKSQGYLELDKSWRHNFLYPLIFQEYIYALAHEQGLNRSILLENTDHDNKYSSLIVKRLITLIHQQNHFLIFDNDSNQNPFWKHNNNLYSQTISEGFVIIVEIPFSPRFVDSLEEKKKILKSNNLRSIHSIFPFLEDQILHLNFVANILIPYPIHLEIVVQSLRYRVKDASSLHLLRFFLFTLNKSISSFSKRNQRFFLFLYNSHVYEYESTFLFLRNKTSHLRSTSSGAFLERIFFYGKIKHLIEVFANDFQAILWLFKDPFMHYVRYQGKSILASKRTSLRMNKWKYYLVNFWQCQFYVWSQPGRVSINQLSNHSLDFLGYLSSVRRNPLAVRSQMLENSFLTDNAIKKFDIIVLLISLIGSLAKAKFCNVLGHPLSKPARADSSDSDIIERFVRICRNLSHYHSGSSKKKSLYRIKYILRLSCARTLARKHKTTVRSFLKRLGSELLEEFLTEDGQVISLIFPRTSSTSWRLYRGGIWYLDITCINDLANHE.

Belongs to the intron maturase 2 family. MatK subfamily.

It is found in the plastid. It localises to the chloroplast. Functionally, usually encoded in the trnK tRNA gene intron. Probably assists in splicing its own and other chloroplast group II introns. The protein is Maturase K of Paeonia cambessedesii (Majorcan peony).